The primary structure comprises 3010 residues: Genome polyprotein (3010 aa).

Ser2 carries the post-translational modification N-acetylserine; by host. The tract at residues Ser2–Lys23 is interaction with STAT1. Residues Ser2–Pro58 form an interaction with EIF2AK2/PKR region. Residues Ser2–Arg59 form an interaction with DDX3X region. The interval Ser2–Ala75 is disordered. The Cytoplasmic segment spans residues Ser2 to Asn168. 2 consecutive short sequence motifs (nuclear localization signal) follow at residues Pro5–Arg13 and Pro38–Thr43. The segment covering Pro7–Tyr16 has biased composition (basic residues). Ser53 is subject to Phosphoserine; by host. Short sequence motifs (nuclear localization signal) lie at residues Pro58–Pro64 and Pro66–Pro71. Residues Pro58–Ala68 show a composition bias toward basic residues. Ser99 carries the post-translational modification Phosphoserine; by host. Positions Pro112–Ala152 are important for endoplasmic reticulum and mitochondrial localization. Position 116 is a phosphoserine; by host PKA (Ser116). Residues Val122–Ser173 are interaction with APOA2. Residues Tyr164 to Gly167 form an important for lipid droplets localization region. Residues Leu169–Ala189 form a helical membrane-spanning segment. Positions Leu178–Ala191 are cleaved as a propeptide — ER anchor for the core protein, removed in mature form by host signal peptidase. Over Ser190–Gly358 the chain is Lumenal. Asn196, Asn209, Asn234, and Asn250 each carry an N-linked (GlcNAc...) asparagine; by host glycan. An important for fusion region spans residues Leu265–Arg296. N-linked (GlcNAc...) asparagine; by host glycosylation occurs at Asn305. The chain crosses the membrane as a helical span at residues Leu359–Ala379. Topologically, residues Gly380–Leu725 are lumenal. Residues Thr385 to Ile411 are HVR1. Asn417, Asn423, Asn430, and Asn448 each carry an N-linked (GlcNAc...) (high mannose) asparagine; by host glycan. 4 disulfide bridges follow: Cys429/Cys552, Cys452/Cys459, Cys486/Cys494, and Cys503/Cys508. Residues Tyr474–Asp479 form an HVR2 region. A CD81-binding 1 region spans residues Leu480–Gln493. Asn532 is a glycosylation site (N-linked (GlcNAc...) (high mannose) asparagine; by host). Asn540 carries N-linked (GlcNAc...) asparagine; by host glycosylation. A CD81-binding 2 region spans residues Pro544–Gly551. Asn556 is a glycosylation site (N-linked (GlcNAc...) (high mannose) asparagine; by host). A disulfide bond links Cys564 and Cys569. Asn576 is a glycosylation site (N-linked (GlcNAc...) (high mannose) asparagine; by host). 3 disulfide bridges follow: Cys581–Cys585, Cys597–Cys620, and Cys607–Cys644. N-linked (GlcNAc...) (high mannose) asparagine; by host glycosylation is found at Asn623 and Asn645. Cysteines 652 and 677 form a disulfide. The PKR/eIF2-alpha phosphorylation homology domain (PePHD) stretch occupies residues Ser660–Glu671. Residues Leu726–Ala746 form a helical membrane-spanning segment. Over Ala747–Ala757 the chain is Lumenal. The chain crosses the membrane as a helical span at residues Ser758–Ile778. The Cytoplasmic portion of the chain corresponds to Lys779–Arg781. The helical transmembrane segment at Leu782–Leu803 threads the bilayer. Residues Pro804–Glu813 lie on the Lumenal side of the membrane. Residues Met814–His834 traverse the membrane as a helical segment. Topologically, residues Tyr835–Phe838 are cytoplasmic. A helical transmembrane segment spans residues Leu839–Val859. Topologically, residues Trp860–His881 are lumenal. The chain crosses the membrane as a helical span at residues Pro882–Leu902. The 124-residue stretch at Gln903–Leu1026 folds into the Peptidase C18 domain. The Cytoplasmic portion of the chain corresponds to Gln903–Thr1657. The segment at Ala904–Arg1206 is protease NS2-3. Cys922 carries S-palmitoyl cysteine; by host lipidation. The tract at residues Ala929 to Val949 is interaction with host SCPS1. Active-site for protease NS2 activity; shared with dimeric partner residues include His952, Glu972, and Cys993. In terms of domain architecture, Peptidase S29 spans Ala1027 to Pro1208. Residues His1083 and Asp1107 each act as charge relay system; for serine protease NS3 activity in the active site. Positions 1123 and 1125 each coordinate Zn(2+). Ser1165 (charge relay system; for serine protease NS3 activity) is an active-site residue. Residues Cys1171 and His1175 each contribute to the Zn(2+) site. The Helicase ATP-binding domain occupies Pro1217–Asn1369. Ala1230–Ser1237 is an ATP binding site. Mg(2+)-binding residues include Ser1237 and Glu1317. The DECH box motif lies at Asp1316 to His1319. The tract at residues Gln1486 to Gly1497 is RNA-binding. Residues Ser1658–Gly1678 form a helical membrane-spanning segment. The interval Ser1679 to Gly1690 is NS3-binding. Topologically, residues Ser1679–Asn1805 are cytoplasmic. A helical transmembrane segment spans residues Thr1806 to Ser1824. At Ala1825–Ala1828 the chain is on the lumenal side. The helical transmembrane segment at Phe1829–Val1849 threads the bilayer. Asp1850 is a topological domain (cytoplasmic). A helical transmembrane segment spans residues Ile1851–Gly1871. Residues Glu1872–Asn1881 lie on the Lumenal side of the membrane. A helical membrane pass occupies residues Leu1882 to Leu1902. Residues Arg1903–Cys1972 are Cytoplasmic-facing. 2 S-palmitoyl cysteine; by host lipidation sites follow: Cys1968 and Cys1972. Residues Ser1973 to Lys2002 lie within the membrane without spanning it. Residues Leu2003 to Arg2989 are Cytoplasmic-facing. Zn(2+) contacts are provided by Cys2011, Cys2029, Cys2031, and Cys2052. Residues Glu2120–Ala2208 form an FKBP8-binding region. The segment at Glu2120–Thr2332 is transcriptional activation. An interaction with non-structural protein 4A region spans residues Pro2135–Pro2139. The segment at Lys2187 to Asp2220 is disordered. An interaction with host SKP2 region spans residues Arg2189–Pro2441. Phosphoserine; by host; in p56 is present on Ser2194. Residues Ser2194–Leu2211 show a composition bias toward low complexity. A phosphoserine; by host; in p58 mark is found at Ser2197, Ser2201, Ser2204, Ser2207, and Ser2210. The segment at Ser2210–Lys2249 is ISDR. The segment at Ser2210–Leu2275 is interaction with EIF2AK2/PKR. The NS4B-binding stretch occupies residues Lys2249 to Tyr2306. The SH3-binding motif lies at Pro2322 to Pro2325. The short motif at Pro2326 to Val2334 is the Nuclear localization signal element. Residue Lys2350 forms a Glycyl lysine isopeptide (Lys-Gly) (interchain with G-Cter in ubiquitin) linkage. Residues Thr2351 to Gln2371 show a composition bias toward polar residues. The segment at Thr2351–Val2408 is disordered. The interval Ser2354–Asp2377 is V3. Acidic residues predominate over residues Thr2372–Val2382. A phosphoserine; by host mark is found at Ser2448 and Ser2461. The 119-residue stretch at Pro2633–Asp2751 folds into the RdRp catalytic domain. 3 residues coordinate Mg(2+): Asp2639, Asp2737, and Asp2738. The helical transmembrane segment at Trp2990–Arg3010 threads the bilayer.

Belongs to the hepacivirus polyprotein family. Homooligomer. Interacts with E1 (via C-terminus). Interacts with the non-structural protein 5A. Interacts (via N-terminus) with host STAT1 (via SH2 domain); this interaction results in decreased STAT1 phosphorylation and ubiquitin-mediated proteasome-dependent STAT1 degradation, leading to decreased IFN-stimulated gene transcription. Interacts with host STAT3; this interaction constitutively activates STAT3. Interacts with host LTBR receptor. Interacts with host TNFRSF1A receptor and possibly induces apoptosis. Interacts with host HNRPK. Interacts with host YWHAE. Interacts with host UBE3A/E6AP. Interacts with host DDX3X. Interacts with host APOA2. Interacts with host RXRA protein. Interacts with host SP110 isoform 3/Sp110b; this interaction sequesters the transcriptional corepressor SP110 away from the nucleus. Interacts with host CREB3 nuclear transcription protein; this interaction triggers cell transformation. Interacts with host ACY3. Interacts with host C1QR1. Interacts with host RBM24; this interaction, which enhances the interaction of the mature core protein with 5'-UTR, may inhibit viral translation and favor replication. Interacts with host EIF2AK2/PKR; this interaction induces the autophosphorylation of EIF2AK2. Part of the viral assembly initiation complex composed of NS2, E1, E2, NS3, NS4A, NS5A and the mature core protein. In terms of assembly, forms a heterodimer with envelope glycoprotein E2. Interacts with mature core protein. Interacts with protease NS2. The heterodimer E1/E2 interacts with host CLDN1; this interaction plays a role in viral entry into host cell. Interacts with host SPSB2 (via C-terminus). Part of the viral assembly initiation complex composed of NS2, E1, E2, NS3, NS4A, NS5A and the mature core protein. Interacts with host NEURL3; this interaction prevents E1 binding to glycoprotein E2. As to quaternary structure, forms a heterodimer with envelope glycoprotein E1. Interacts with host CD81 and SCARB1 receptors; these interactions play a role in viral entry into host cell. Interacts with host EIF2AK2/PKR; this interaction inhibits EIF2AK2 and probably allows the virus to evade the innate immune response. Interacts with host CD209/DC-SIGN and CLEC4M/DC-SIGNR. Interact with host SPCS1; this interaction is essential for viral particle assembly. Interacts with protease NS2. The heterodimer E1/E2 interacts with host CLDN1; this interaction plays a role in viral entry into host cell. Part of the viral assembly initiation complex composed of NS2, E1, E2, NS3, NS4A, NS5A and the mature core protein. Interacts with host SLC3A2/4F2hc; the interaction may facilitate viral entry into host cell. Interacts with human PLSCR1. Homohexamer. Homoheptamer. Interacts with protease NS2. In terms of assembly, homodimer. Interacts with host SPCS1; this interaction is essential for viral particle assembly. Interacts with envelope glycoprotein E1. Interacts with envelope glycoprotein E2. Interacts with viroporin p7. Interacts with serine protease/helicase NS3. Part of the replication complex composed of NS2, NS3, NS4A, NS4B, NS5A and the RNA-directed RNA polymerase embedded in an ER-derived membranous web. Part of the viral assembly initiation complex composed of NS2, E1, E2, NS3, NS4A, NS5A and the mature core protein. As to quaternary structure, interacts with protease NS2. Interacts with non-structural protein 4A; this interaction stabilizes the folding of NS3 serine protease. NS3-NS4A interaction is essential for NS3 activation and allows membrane anchorage of the latter. NS3/NS4A complex also prevents phosphorylation of host IRF3, thus preventing the establishment of dsRNA induced antiviral state. Interacts with host MAVS; this interaction leads to the cleavage and inhibition of host MAVS. Interacts with host TICAM1; this interaction leads to the cleavage and inhibition of host TICAM1. Interacts with host TANK-binding kinase/TBK1; this interaction results in the inhibition of the association between TBK1 and IRF3, which leads to the inhibition of IRF3 activation. Interacts with host RBM24. Part of the replication complex composed of NS2, NS3, NS4A, NS4B, NS5A and the RNA-directed RNA polymerase embedded in an ER-derived membranous web. Part of the viral assembly initiation complex composed of NS2, E1, E2, NS3, NS4A, NS5A and the mature core protein. Interacts with NS3 serine protease; this interaction stabilizes the folding of NS3 serine protease. NS3-NS4A interaction is essential for NS3 activation and allows membrane anchorage of the latter. Interacts with non-structural protein 5A (via N-terminus). Part of the replication complex composed of NS2, NS3, NS4A, NS4B, NS5A and the RNA-directed RNA polymerase embedded in an ER-derived membranous web. Part of the viral assembly initiation complex composed of NS2, E1, E2, NS3, NS4A, NS5A and the mature core protein. In terms of assembly, homomultimer. Interacts with non-structural protein NS5A. Interacts with host PLA2G4C; this interaction likely initiates the recruitment of replication complexes to lipid droplets. Interacts with host STING; this interaction disrupts the interaction between STING and TBK1 thereby suppressing the interferon signaling. Part of the replication complex composed of NS2, NS3, NS4A, NS4B, NS5A and the RNA-directed RNA polymerase embedded in an ER-derived membranous web. As to quaternary structure, monomer. Homodimer; dimerization is required for RNA-binding. Interacts with the mature core protein. Interacts (via N-terminus) with non-structural protein 4A. Interacts with non-structural protein 4B. Interacts (via region D2) with RNA-directed RNA polymerase. Part of the viral assembly initiation complex composed of NS2, E1, E2, NS3, NS4A, NS5A and the mature core protein. Part of the replication complex composed of NS2, NS3, NS4A, NS4B, NS5A and the RNA-directed RNA polymerase embedded in an ER-derived membranous web. Interacts with host GRB2. Interacts with host BIN1. Interacts with host PIK3R1. Interacts with host SRCAP. Interacts with host FKBP8. Interacts (via C-terminus) with host VAPB (via MSP domain). Interacts with host EIF2AK2/PKR; this interaction leads to disruption of EIF2AK2 dimerization by NS5A and probably allows the virus to evade the innate immune response. Interacts (via N-terminus) with host PACSIN2 (via N-terminus); this interaction attenuates protein kinase C alpha-mediated phosphorylation of PACSIN2 by disrupting the interaction between PACSIN2 and PRKCA. Interacts (via N-terminus) with host SRC kinase (via SH2 domain). Interacts with most Src-family kinases. Interacts with host IFI27 and SKP2; promotes the ubiquitin-mediated proteasomal degradation of NS5A. Interacts with host GPS2. Interacts with host TNFRSF21; this interaction allows the modulation by the virus of JNK, p38 MAPK, STAT3, and Akt signaling pathways in a DR6-dependent manner. Interacts (via N-terminus) with host CIDEB (via N-terminus); this interaction seems to regulate the association of HCV particles with APOE. Interacts with host CHKA/Choline Kinase-alpha; CHKA bridges host PI4KA and NS5A and potentiates NS5A-stimulated PI4KA activity, which then facilitates the targeting of the ternary complex to the ER for viral replication. Interacts with host SPSB2 (via C-terminus); this interaction targets NS5A for ubiquitination and degradation. Interacts with host RAB18; this interaction may promote the association of NS5A and other replicase components with lipid droplets. Interacts (via region D2) with host PPIA/CYPA; the interaction stimulates RNA-binding ability of NS5A and is dependent on the peptidyl-prolyl cis-trans isomerase activity of PPIA/CYPA. Interacts with host TRIM14; this interaction induces the degradation of NS5A. Homooligomer. Interacts with non-structural protein 5A. Interacts with host VAPB. Interacts with host PRK2/PKN2. Interacts with host HNRNPA1 and SEPT6; these interactions facilitate viral replication. Part of the replication complex composed of NS2, NS3, NS4A, NS4B, NS5A and the RNA-directed RNA polymerase. The cofactor is Zn(2+). It depends on Mg(2+) as a cofactor. In terms of processing, specific enzymatic cleavages in vivo yield mature proteins. The structural proteins, core, E1, E2 and p7 are produced by proteolytic processing by host signal peptidases. The core protein precursor is synthesized as a 23 kDa, which is retained in the ER membrane through the hydrophobic signal peptide. Cleavage by the signal peptidase releases the 21 kDa mature core protein. The cleavage of the core protein precursor occurs between aminoacids 176 and 188 but the exact cleavage site is not known. Some degraded forms of the core protein appear as well during the course of infection. The other proteins (p7, NS2, NS3, NS4A, NS4B, NS5A and NS5B) are cleaved by the viral proteases. Autoprocessing between NS2 and NS3 is mediated by the NS2 cysteine protease catalytic domain and regulated by the NS3 N-terminal domain. Post-translationally, phosphorylated by host PKC and PKA. Ubiquitinated; mediated by UBE3A and leading to core protein subsequent proteasomal degradation. In terms of processing, highly N-glycosylated. Post-translationally, palmitoylation is required for NS2/3 autoprocessing and E2 recruitment to membranes. Palmitoylated. This modification may play a role in its polymerization or in protein-protein interactions. In terms of processing, phosphorylated on serines in a basal form termed p56. p58 is a hyperphosphorylated form of p56. p56 and p58 coexist in the cell in roughly equivalent amounts. Hyperphosphorylation is dependent on the presence of NS4A. Host CSNK1A1/CKI-alpha or RPS6KB1 kinases may be responsible for NS5A phosphorylation. Post-translationally, tyrosine phosphorylation is essential for the interaction with host SRC. Ubiquitinated. Ubiquitination, most probably at Lys-2350, mediated by host IFI27 and SKP2 leads to proteasomal degradation, restricting viral infection. Ubiquitination by host TRIM22 leads to interruption of viral replication. In terms of processing, the N-terminus is phosphorylated by host PRK2/PKN2.

The protein localises to the host endoplasmic reticulum membrane. Its subcellular location is the host mitochondrion membrane. The protein resides in the virion. It is found in the host cytoplasm. It localises to the host nucleus. The protein localises to the host lipid droplet. Its subcellular location is the virion membrane. The protein resides in the host mitochondrion. It is found in the host cell membrane. It localises to the host perinuclear region. The enzyme catalyses Hydrolysis of four peptide bonds in the viral precursor polyprotein, commonly with Asp or Glu in the P6 position, Cys or Thr in P1 and Ser or Ala in P1'.. It catalyses the reaction a ribonucleoside 5'-triphosphate + H2O = a ribonucleoside 5'-diphosphate + phosphate + H(+). It carries out the reaction ATP + H2O = ADP + phosphate + H(+). The catalysed reaction is RNA(n) + a ribonucleoside 5'-triphosphate = RNA(n+1) + diphosphate. Its activity is regulated as follows. Inhibited by the antiviral drug hexamethylene amiloride. Inhibition by amantadine appears to be genotype-dependent. Also inhibited by long-alkyl-chain iminosugar derivatives. With respect to regulation, activity is up-regulated by PRK2/PKN2-mediated phosphorylation. In terms of biological role, packages viral RNA to form a viral nucleocapsid, and promotes virion budding. Participates in the viral particle production as a result of its interaction with the non-structural protein 5A. Binds RNA and may function as a RNA chaperone to induce the RNA structural rearrangements taking place during virus replication. Modulates viral translation initiation by interacting with viral IRES and 40S ribosomal subunit. Affects various cell signaling pathways, host immunity and lipid metabolism. Prevents the establishment of cellular antiviral state by blocking the interferon-alpha/beta (IFN-alpha/beta) and IFN-gamma signaling pathways and by blocking the formation of phosphorylated STAT1 and promoting ubiquitin-mediated proteasome-dependent degradation of STAT1. Activates STAT3 leading to cellular transformation. Regulates the activity of cellular genes, including c-myc and c-fos. May repress the promoter of p53, and sequester CREB3 and SP110 isoform 3/Sp110b in the cytoplasm. Represses cell cycle negative regulating factor CDKN1A, thereby interrupting an important check point of normal cell cycle regulation. Targets transcription factors involved in the regulation of inflammatory responses and in the immune response: suppresses TNF-induced NF-kappa-B activation, and activates AP-1. Binds to dendritic cells (DCs) via C1QR1, resulting in down-regulation of T-lymphocytes proliferation. Alters lipid metabolism by interacting with hepatocellular proteins involved in lipid accumulation and storage. Induces up-regulation of FAS promoter activity, and thereby contributes to the increased triglyceride accumulation in hepatocytes (steatosis). Functionally, forms a heterodimer with envelope glycoprotein E2, which mediates virus attachment to the host cell, virion internalization through clathrin-dependent endocytosis and fusion with host membrane. Fusion with the host cell is most likely mediated by both E1 and E2, through conformational rearrangements of the heterodimer required for fusion rather than a classical class II fusion mechanism. E1/E2 heterodimer binds host apolipoproteins such as APOB and ApoE thereby forming a lipo-viro-particle (LVP). APOE associated to the LVP allows the initial virus attachment to cell surface receptors such as the heparan sulfate proteoglycans (HSPGs), syndecan-1 (SDC1), syndecan-1 (SDC2), the low-density lipoprotein receptor (LDLR) and scavenger receptor class B type I (SCARB1). The cholesterol transfer activity of SCARB1 allows E2 exposure and binding of E2 to SCARB1 and the tetraspanin CD81. E1/E2 heterodimer binding on CD81 activates the epithelial growth factor receptor (EGFR) signaling pathway. Diffusion of the complex E1-E2-EGFR-SCARB1-CD81 to the cell lateral membrane allows further interaction with Claudin 1 (CLDN1) and occludin (OCLN) to finally trigger HCV entry. Forms a heterodimer with envelope glycoprotein E1, which mediates virus attachment to the host cell, virion internalization through clathrin-dependent endocytosis and fusion with host membrane. Fusion with the host cell is most likely mediated by both E1 and E2, through conformational rearrangements of the heterodimer required for fusion rather than a classical class II fusion mechanism. The interaction between envelope glycoprotein E2 and host apolipoprotein E/APOE allows the proper assembly, maturation and infectivity of the viral particles. This interaction is probably promoted via the up-regulation of cellular autophagy by the virus. E1/E2 heterodimer binds host apolipoproteins such as APOB and APOE thereby forming a lipo-viro-particle (LVP). APOE associated to the LVP allows the initial virus attachment to cell surface receptors such as the heparan sulfate proteoglycans (HSPGs), syndecan-1 (SDC1), syndecan-1 (SDC2), the low-density lipoprotein receptor (LDLR) and scavenger receptor class B type I (SCARB1). The cholesterol transfer activity of SCARB1 allows E2 exposure and binding of E2 to SCARB1 and the tetraspanin CD81. E1/E2 heterodimer binding on CD81 activates the epithelial growth factor receptor (EGFR) signaling pathway. Diffusion of the complex E1-E2-EGFR-SCARB1-CD81 to the cell lateral membrane allows further interaction with Claudin 1 (CLDN1) and occludin (OCLN) to finally trigger HCV entry. Inhibits host EIF2AK2/PKR activation, preventing the establishment of an antiviral state. Viral ligand for CD209/DC-SIGN and CLEC4M/DC-SIGNR, which are respectively found on dendritic cells (DCs), and on liver sinusoidal endothelial cells and macrophage-like cells of lymph node sinuses. These interactions allow the capture of circulating HCV particles by these cells and subsequent facilitated transmission to permissive cells such as hepatocytes and lymphocyte subpopulations. The interaction between E2 and host amino acid transporter complex formed by SLC3A2 and SLC7A5/LAT1 may facilitate viral entry into host cell. Its function is as follows. Ion channel protein that acts as a viroporin and plays an essential role in the assembly, envelopment and secretion of viral particles. Regulates the host cell secretory pathway, which induces the intracellular retention of viral glycoproteins and favors assembly of viral particles. Creates a pore in acidic organelles and releases Ca(2+) and H(+) in the cytoplasm of infected cells, leading to a productive viral infection. High levels of cytoplasmic Ca(2+) may trigger membrane trafficking and transport of viral ER-associated proteins to viroplasms, sites of viral genome replication. This ionic imbalance induces the assembly of the inflammasome complex, which triggers the maturation of pro-IL-1beta into IL-1beta through the action of caspase-1. Targets also host mitochondria and induces mitochondrial depolarization. In addition of its role as a viroporin, acts as a lipid raft adhesion factor. In terms of biological role, cysteine protease required for the proteolytic auto-cleavage between the non-structural proteins NS2 and NS3. The N-terminus of NS3 is required for the function of NS2 protease (active region NS2-3). Promotes the initiation of viral particle assembly by mediating the interaction between structural and non-structural proteins. Functionally, displays three enzymatic activities: serine protease with a chymotrypsin-like fold, NTPase and RNA helicase. NS3 serine protease, in association with NS4A, is responsible for the cleavages of NS3-NS4A, NS4A-NS4B, NS4B-NS5A and NS5A-NS5B. The NS3/NS4A complex prevents phosphorylation of host IRF3, thus preventing the establishment of dsRNA induced antiviral state. The NS3/NS4A complex induces host amino acid transporter component SLC3A2, thus contributing to HCV propagation. NS3 RNA helicase binds to RNA and unwinds both dsDNA and dsRNA in the 3' to 5' direction, and likely resolves RNA complicated stable secondary structures in the template strand. Binds a single ATP and catalyzes the unzipping of a single base pair of dsRNA. Inhibits host antiviral proteins TBK1 and IRF3 thereby preventing the establishment of an antiviral state. Cleaves host MAVS/CARDIF thereby preventing the establishment of an antiviral state. Cleaves host TICAM1/TRIF, thereby disrupting TLR3 signaling and preventing the establishment of an antiviral state. Induces a specific membrane alteration that serves as a scaffold for the virus replication complex. This membrane alteration gives rise to the so-called ER-derived membranous web that contains the replication complex. NS4B self-interaction contributes to its function in membranous web formation. Promotes host TRIF protein degradation in a CASP8-dependent manner thereby inhibiting host TLR3-mediated interferon signaling. Disrupts the interaction between STING and TBK1 contributing to the inhibition of interferon signaling. Its function is as follows. Phosphorylated protein that is indispensable for viral replication and assembly. Both hypo- and hyperphosphorylated states are required for the viral life cycle. The hyperphosphorylated form of NS5A is an inhibitor of viral replication. Involved in RNA-binding and especially in binding to the viral genome. Zinc is essential for RNA-binding. Participates in the viral particle production as a result of its interaction with the mature viral core protein. Its interaction with host VAPB may target the viral replication complex to vesicles. Down-regulates viral IRES translation initiation. Mediates interferon resistance, presumably by interacting with and inhibiting host EIF2AK2/PKR. Prevents BIN1-induced apoptosis. Acts as a transcriptional activator of some host genes important for viral replication when localized in the nucleus. Via the interaction with host PACSIN2, modulates lipid droplet formation in order to promote virion assembly. Modulates TNFRSF21/DR6 signaling pathway for viral propagation. In terms of biological role, RNA-dependent RNA polymerase that performs primer-template recognition and RNA synthesis during viral replication. Initiates RNA transcription/replication at a flavin adenine dinucleotide (FAD), resulting in a 5'- FAD cap on viral RNAs. In this way, recognition of viral 5' RNA by host pattern recognition receptors can be bypassed, thereby evading activation of antiviral pathways. Functionally, peptide cofactor which forms a non-covalent complex with the N-terminal of NS3 serine protease. The NS3/NS4A complex prevents phosphorylation of host IRF3, thus preventing the establishment of dsRNA induced antiviral state. The NS3/NS4A complex induces host amino acid transporter component SLC3A2, thus contributing to HCV propagation. The protein is Genome polyprotein of Homo sapiens (Human).